We begin with the raw amino-acid sequence, 208 residues long: Small ribosomal subunit protein uS4 (208 aa).

One can recognise an S4 RNA-binding domain in the interval 98–163; it reads SRLDNVVYRA…LTPFVIARAV (66 aa).

It belongs to the universal ribosomal protein uS4 family. As to quaternary structure, part of the 30S ribosomal subunit. Contacts protein S5. The interaction surface between S4 and S5 is involved in control of translational fidelity.

Its function is as follows. One of the primary rRNA binding proteins, it binds directly to 16S rRNA where it nucleates assembly of the body of the 30S subunit. In terms of biological role, with S5 and S12 plays an important role in translational accuracy. This is Small ribosomal subunit protein uS4 from Acidothermus cellulolyticus (strain ATCC 43068 / DSM 8971 / 11B).